Reading from the N-terminus, the 111-residue chain is uncharacterized protein (111 aa).

A helical membrane pass occupies residues 20–39 (PVDTTGLIFFAVFASSFVLY).

It is found in the membrane. This is an uncharacterized protein from Saccharomyces cerevisiae (strain ATCC 204508 / S288c) (Baker's yeast).